The primary structure comprises 528 residues: Biotin carboxylase 1, chloroplastic (528 aa).

Residues 1–51 constitute a chloroplast transit peptide; sequence MEATLPVCKSVTSTPGLFMGKTSGIRSSQCSFMMGNKVNFPRQRAQTAHVH. ATP-binding positions include K179, K221, 227-228, 263-266, and H271; these read GG and EKYV. Residues 183-380 enclose the ATP-grasp domain; that stretch reads RETMKKAGVP…LIEEQIRVAM (198 aa). A hydrogencarbonate-binding site is contributed by K300. E338 and E351 together coordinate ATP. Positions 338, 351, and 353 each coordinate Mg(2+). Residues E338, E351, and N353 each contribute to the Mn(2+) site. Positions 355, 358, and 401 each coordinate hydrogencarbonate. R355 is an active-site residue. Residue R401 coordinates biotin.

Acetyl-CoA carboxylase is a heterohexamer composed of biotin carboxyl carrier protein, biotin carboxylase and two subunits each of ACCase subunit alpha and ACCase plastid-coded subunit beta (accD). The cofactor is Mg(2+). Requires Mn(2+) as cofactor.

It localises to the plastid. The protein resides in the chloroplast. The catalysed reaction is N(6)-biotinyl-L-lysyl-[protein] + hydrogencarbonate + ATP = N(6)-carboxybiotinyl-L-lysyl-[protein] + ADP + phosphate + H(+). The protein operates within lipid metabolism; malonyl-CoA biosynthesis; malonyl-CoA from acetyl-CoA: step 1/1. Functionally, this protein is a component of the acetyl coenzyme A carboxylase complex; first, biotin carboxylase catalyzes the carboxylation of the carrier protein and then the transcarboxylase transfers the carboxyl group to form malonyl-CoA. This chain is Biotin carboxylase 1, chloroplastic, found in Populus trichocarpa (Western balsam poplar).